Reading from the N-terminus, the 423-residue chain is UPF0229 protein Pmen_4018 (423 aa).

Residues 65 to 108 (HHGRGGKQTIVHPGNKEFTAGERIPRPQGGGGGRGSGKASNSGE) are disordered.

The protein belongs to the UPF0229 family.

This chain is UPF0229 protein Pmen_4018, found in Ectopseudomonas mendocina (strain ymp) (Pseudomonas mendocina).